A 463-amino-acid polypeptide reads, in one-letter code: Phosphomannomutase (463 aa).

Catalysis depends on Ser103, which acts as the Phosphoserine intermediate. Mg(2+) is bound by residues Ser103, Asp248, Asp250, and Asp252.

Belongs to the phosphohexose mutase family. Mg(2+) is required as a cofactor.

It localises to the cell membrane. It carries out the reaction alpha-D-mannose 1-phosphate = D-mannose 6-phosphate. Its pathway is nucleotide-sugar biosynthesis; GDP-alpha-D-mannose biosynthesis; alpha-D-mannose 1-phosphate from D-fructose 6-phosphate: step 2/2. It participates in bacterial outer membrane biogenesis; LPS O-antigen biosynthesis. In terms of biological role, involved in GDP-mannose biosynthesis which serves as the activated sugar nucleotide precursor for mannose residues in cell surface polysaccharides. The chain is Phosphomannomutase (rfbB) from Vibrio cholerae serotype O1 (strain ATCC 39315 / El Tor Inaba N16961).